The sequence spans 651 residues: Beta-glucuronidase (651 aa).

The N-terminal stretch at 1–22 is a signal peptide; sequence MARGSAVAWAALGPLLWGCALG. N-linked (GlcNAc...) asparagine glycosylation is found at Asn173, Asn272, and Asn420. Glu451 functions as the Proton donor in the catalytic mechanism. Residue Asn631 is glycosylated (N-linked (GlcNAc...) asparagine).

Belongs to the glycosyl hydrolase 2 family. Homotetramer. In terms of processing, N-linked glycosylated with 3 to 4 oligosaccharide chains.

It localises to the lysosome. The enzyme catalyses a beta-D-glucuronoside + H2O = D-glucuronate + an alcohol. With respect to regulation, inhibited by L-aspartic acid. Its function is as follows. Plays an important role in the degradation of dermatan and keratan sulfates. This is Beta-glucuronidase (GUSB) from Homo sapiens (Human).